The primary structure comprises 1025 residues: Myosin phosphatase Rho-interacting protein (1025 aa).

Positions 2–383 (SAAKENPCRK…DRRSTEPSVT (382 aa)) are interaction with F-actin. The region spanning 43–150 (KPIYGGWLLL…WLEMLMVYPR (108 aa)) is the PH 1 domain. Disordered stretches follow at residues 152 to 302 (NKQN…RRSQ) and 317 to 383 (HMET…PSVT). A compositionally biased stretch (low complexity) spans 179–189 (SSSSSSSSSSS). A phosphoserine mark is found at Ser-192, Ser-217, Ser-218, Ser-220, Ser-224, and Ser-226. A compositionally biased stretch (low complexity) spans 217–236 (SSLSPAQSPSQSQPPAASSL). Residues 239–263 (PGLESKEEESAMSSDRMDCGRKVRV) are compositionally biased toward basic and acidic residues. Ser-265 and Ser-269 each carry phosphoserine. The segment covering 271-281 (EKTKQDLKAEE) has biased composition (basic and acidic residues). The span at 284 to 294 (LPPPLSPPSPS) shows a compositional bias: pro residues. Ser-289 and Ser-292 each carry phosphoserine. Phosphothreonine is present on Thr-295. Residue Ser-326 is modified to Phosphoserine. Over residues 332-348 (RQGRSEKRAFPRKRDFT) the composition is skewed to basic and acidic residues. Position 348 is a phosphothreonine (Thr-348). Phosphoserine occurs at positions 362 and 365. The PH 2 domain occupies 387–483 (LNFKKGWLTK…WIQTIMKHVH (97 aa)). Disordered stretches follow at residues 485–545 (TTAP…TFDW) and 560–591 (VGGV…RREE). Ser-493 carries the post-translational modification Phosphoserine. Basic and acidic residues-rich tracts occupy residues 524–545 (PEQK…TFDW) and 567–589 (DTHE…ARRR). Residues 546–824 (AEFRPIQQAL…SVQRELEVLS (279 aa)) form an interaction with RHOA region. At Ser-619 the chain carries Phosphoserine. Residue Thr-646 is modified to Phosphothreonine. 2 positions are modified to phosphoserine: Ser-663 and Ser-800. The stretch at 673 to 977 (HELTSLLEKE…AATEALGEKS (305 aa)) forms a coiled coil. The interaction with PPP1R12A stretch occupies residues 824–879 (SEQYSQKCLENAHLAQALEAERQALRQCQRENQELNAHNQELNNRLAAEITRLRTL). Phosphoserine occurs at positions 891, 977, 993, 1014, and 1016.

In terms of assembly, binds F-actin through its N-terminus. Interacts with MYZAP. Binds RHOA, PPP1R12A/MBS and PPP1R12C/MBS85 through adjacent coiled coil domains.

It is found in the cytoplasm. The protein localises to the cytoskeleton. Targets myosin phosphatase to the actin cytoskeleton. Required for the regulation of the actin cytoskeleton by RhoA and ROCK1. Depletion leads to an increased number of stress fibers in smooth muscle cells through stabilization of actin fibers by phosphorylated myosin. Overexpression of MRIP as well as its F-actin-binding region leads to disassembly of stress fibers in neuronal cells. The sequence is that of Myosin phosphatase Rho-interacting protein (MPRIP) from Homo sapiens (Human).